The sequence spans 585 residues: Formate--tetrahydrofolate ligase (585 aa).

65 to 72 contacts ATP; sequence TPHGEGKT.

It belongs to the formate--tetrahydrofolate ligase family.

The enzyme catalyses (6S)-5,6,7,8-tetrahydrofolate + formate + ATP = (6R)-10-formyltetrahydrofolate + ADP + phosphate. The protein operates within one-carbon metabolism; tetrahydrofolate interconversion. The sequence is that of Formate--tetrahydrofolate ligase from Shewanella baltica (strain OS155 / ATCC BAA-1091).